The primary structure comprises 502 residues: MESTHALQPAEALETMRSQTVLVAGAGVAGRGVISMLCALGARLVLVADDNAQALGHIADDGDTELRLLSVSDAIDTLEELAPQLVVTSPGWKPESPLLARAAELNIPVIGDIAAAWLADQAGAFGQPRTWLAVTGTNGKTTTTAMLTSMLIADGRAALAVGNIGIAPSAALAAQHRGEPRSDVFVAEVSSFQLHWAPMFKPTVGCILNLAEDHLDWHGSYENYCADKAQVLTAEESVLALDDDDVLTTARAREVVARRGYTIHDPEEVASQNTERVVGVRDGRLVEVVIGDPSQTTDLAPAQGISPPGPAGLADAAASAAMARALGVAPGAIEAALAGFKVQAHRGQVVLEHGGVTWIDNSKATNPHAAEAALRGQRNVIWVAGGQLKGAAVDGLIRAIGGALKAVVALGVDRAELVAEVSRQLPDLPVTVIDATDPEEAMRAVARAAHGLAQPGDSVVLAPAAASLDMYTGMSQRGDLFAQYAVAYAGADRADERTQERG.

136-142 (GTNGKTT) is a binding site for ATP.

This sequence belongs to the MurCDEF family.

The protein localises to the cytoplasm. It carries out the reaction UDP-N-acetyl-alpha-D-muramoyl-L-alanine + D-glutamate + ATP = UDP-N-acetyl-alpha-D-muramoyl-L-alanyl-D-glutamate + ADP + phosphate + H(+). It participates in cell wall biogenesis; peptidoglycan biosynthesis. Functionally, cell wall formation. Catalyzes the addition of glutamate to the nucleotide precursor UDP-N-acetylmuramoyl-L-alanine (UMA). In Corynebacterium jeikeium (strain K411), this protein is UDP-N-acetylmuramoylalanine--D-glutamate ligase.